Reading from the N-terminus, the 165-residue chain is Putative universal stress protein SH1215 (165 aa).

Belongs to the universal stress protein A family.

It is found in the cytoplasm. The protein is Putative universal stress protein SH1215 of Staphylococcus haemolyticus (strain JCSC1435).